The primary structure comprises 216 residues: Pyridoxine/pyridoxamine 5'-phosphate oxidase (216 aa).

Residues 65 to 70, 80 to 81, arginine 86, lysine 87, and glutamine 109 each bind FMN; these read RMVLLK and YT. Lysine 70 lines the substrate pocket. 3 residues coordinate substrate: tyrosine 127, arginine 131, and serine 135. Residues 144–145 and tryptophan 189 each bind FMN; that span reads QS. 195–197 is a substrate binding site; sequence RLH. Arginine 199 contributes to the FMN binding site.

The protein belongs to the pyridoxamine 5'-phosphate oxidase family. Homodimer. It depends on FMN as a cofactor.

It catalyses the reaction pyridoxamine 5'-phosphate + O2 + H2O = pyridoxal 5'-phosphate + H2O2 + NH4(+). It carries out the reaction pyridoxine 5'-phosphate + O2 = pyridoxal 5'-phosphate + H2O2. It functions in the pathway cofactor metabolism; pyridoxal 5'-phosphate salvage; pyridoxal 5'-phosphate from pyridoxamine 5'-phosphate: step 1/1. The protein operates within cofactor metabolism; pyridoxal 5'-phosphate salvage; pyridoxal 5'-phosphate from pyridoxine 5'-phosphate: step 1/1. Its function is as follows. Catalyzes the oxidation of either pyridoxine 5'-phosphate (PNP) or pyridoxamine 5'-phosphate (PMP) into pyridoxal 5'-phosphate (PLP). In Sphingopyxis alaskensis (strain DSM 13593 / LMG 18877 / RB2256) (Sphingomonas alaskensis), this protein is Pyridoxine/pyridoxamine 5'-phosphate oxidase.